A 323-amino-acid chain; its full sequence is Prostaglandin F synthase 2 (323 aa).

NADP(+)-binding positions include 20–24 (GFGTY) and D50. Y55 functions as the Proton donor in the catalytic mechanism. H117 is a substrate binding site. NADP(+) contacts are provided by residues 166–167 (SN), Q190, 216–221 (YAALGA), and 270–280 (KSFNKKRIKEN).

Belongs to the aldo/keto reductase family. In terms of assembly, monomer.

It localises to the cytoplasm. It carries out the reaction prostaglandin F2alpha + NADP(+) = prostaglandin D2 + NADPH + H(+). It participates in lipid metabolism; prostaglandin biosynthesis. Its function is as follows. Catalyzes the reduction of PGD(2) and PGH(2) to PGF(2 alpha) and a stereoisomer, respectively. It has a broad substrate specificity and also reduces other carbonyl compounds. The chain is Prostaglandin F synthase 2 from Bos taurus (Bovine).